Reading from the N-terminus, the 332-residue chain is CMRF35-like molecule 9 (332 aa).

The signal sequence occupies residues 1-18 (MRLLVLLWGCLLLPGYEA). An Ig-like V-type domain is found at 19–121 (LEGPEEISGF…RGPDESLLIS (103 aa)). Residues 19–247 (LEGPEEISGF…KPRVSIPMVR (229 aa)) lie on the Extracellular side of the membrane. C37 and C107 are joined by a disulfide. N96 carries N-linked (GlcNAc...) asparagine glycosylation. O-linked (GalNAc...) threonine glycans are attached at residues T137, T143, T144, T155, T161, T170, T171, T177, T187, and T195. The segment at 146-239 (LQPKAKAQQT…PALSSGSSKP (94 aa)) is disordered. The span at 147-158 (QPKAKAQQTQPP) shows a compositional bias: low complexity. Over residues 168 to 181 (AATTAKQGKTGAEA) the composition is skewed to low complexity. A compositionally biased stretch (polar residues) spans 186–205 (GTSQYGHERTSQYTGTSPHP). S196 carries O-linked (GalNAc...) serine glycosylation. O-linked (GalNAc...) threonine glycans are attached at residues T199 and T201. An O-linked (GalNAc...) serine glycan is attached at S202. T207 is a glycosylation site (O-linked (GalNAc...) threonine). S208, S213, S214, and S222 each carry an O-linked (GalNAc...) serine glycan. A compositionally biased stretch (polar residues) spans 220-239 (LDSTSAEDTSPALSSGSSKP). O-linked (GalNAc...) threonine glycosylation is present at T223. A glycan (O-linked (GalNAc...) serine) is linked at S224. The O-linked (GalNAc...) threonine glycan is linked to T228. O-linked (GalNAc...) serine glycosylation is found at S229 and S237. A helical transmembrane segment spans residues 248–268 (ILAPVLVLLSLLSAAGLIAFC). Residues 269 to 332 (SHLLLWRKEA…ELGFSKFVSA (64 aa)) are Cytoplasmic-facing.

It belongs to the CD300 family. In terms of processing, O-glycosylated with sialylated oligosaccharides. As to expression, highly expressed in heart, skeletal muscle and placenta.

The protein localises to the apical cell membrane. It localises to the basolateral cell membrane. The protein resides in the endosome. Its subcellular location is the multivesicular body membrane. Its function is as follows. Receptor which may mediate L-selectin-dependent lymphocyte rollings. Binds SELL in a calcium dependent manner. Binds lymphocyte. In Homo sapiens (Human), this protein is CMRF35-like molecule 9 (CD300LG).